Here is a 270-residue protein sequence, read N- to C-terminus: Putative tRNA (cytidine(32)/guanosine(34)-2'-O)-methyltransferase (270 aa).

The S-adenosyl-L-methionine site is built by G53, W55, D78, D94, and D119. K159 functions as the Proton acceptor in the catalytic mechanism.

It belongs to the class I-like SAM-binding methyltransferase superfamily. RNA methyltransferase RlmE family. TRM7 subfamily.

The protein localises to the cytoplasm. The enzyme catalyses cytidine(32)/guanosine(34) in tRNA + 2 S-adenosyl-L-methionine = 2'-O-methylcytidine(32)/2'-O-methylguanosine(34) in tRNA + 2 S-adenosyl-L-homocysteine + 2 H(+). Methylates the 2'-O-ribose of nucleotides at positions 32 and 34 of the tRNA anticodon loop of substrate tRNAs. This is Putative tRNA (cytidine(32)/guanosine(34)-2'-O)-methyltransferase (fsjA) from Dictyostelium discoideum (Social amoeba).